We begin with the raw amino-acid sequence, 241 residues long: Ribonuclease PH (241 aa).

Residues Arg89 and 127–129 (GTR) each bind phosphate.

The protein belongs to the RNase PH family. As to quaternary structure, homohexameric ring arranged as a trimer of dimers.

It carries out the reaction tRNA(n+1) + phosphate = tRNA(n) + a ribonucleoside 5'-diphosphate. Its function is as follows. Phosphorolytic 3'-5' exoribonuclease that plays an important role in tRNA 3'-end maturation. Removes nucleotide residues following the 3'-CCA terminus of tRNAs; can also add nucleotides to the ends of RNA molecules by using nucleoside diphosphates as substrates, but this may not be physiologically important. Probably plays a role in initiation of 16S rRNA degradation (leading to ribosome degradation) during starvation. In Stenotrophomonas maltophilia (strain K279a), this protein is Ribonuclease PH.